Reading from the N-terminus, the 79-residue chain is RNA-binding protein Hfq (79 aa).

The region spanning 10-70 is the Sm domain; that stretch reads DVFLNTVRKQ…ISTIMPGQPV (61 aa).

This sequence belongs to the Hfq family. As to quaternary structure, homohexamer.

In terms of biological role, RNA chaperone that binds small regulatory RNA (sRNAs) and mRNAs to facilitate mRNA translational regulation in response to envelope stress, environmental stress and changes in metabolite concentrations. Also binds with high specificity to tRNAs. In Bartonella quintana (strain Toulouse) (Rochalimaea quintana), this protein is RNA-binding protein Hfq.